A 513-amino-acid chain; its full sequence is Cytochrome P450 4d10 (513 aa).

The heme site is built by glutamate 317 and cysteine 457.

It belongs to the cytochrome P450 family. Heme is required as a cofactor.

The protein resides in the endoplasmic reticulum membrane. The protein localises to the microsome membrane. May play an important role in the maintenance of specific insect-host plant relationships. May be involved in xenobiotic metabolism. The polypeptide is Cytochrome P450 4d10 (Cyp4d10) (Drosophila mettleri (Fruit fly)).